Reading from the N-terminus, the 545-residue chain is Cytochrome P450 10 (545 aa).

Heme is bound at residue cysteine 493.

This sequence belongs to the cytochrome P450 family. It depends on heme as a cofactor. As to expression, abundantly expressed in the female gonadotropic hormone producing dorsal bodies.

Its function is as follows. May be involved in the synthesis of the female gonadotropic hormone produced by the dorsal bodies. This chain is Cytochrome P450 10 (CYP10), found in Lymnaea stagnalis (Great pond snail).